Reading from the N-terminus, the 294-residue chain is Survival motor neuron protein (294 aa).

The span at 1 to 12 (MAMSSGGSGGGV) shows a compositional bias: gly residues. Residues 1–32 (MAMSSGGSGGGVPEQEDSVLFRRGTGQSDDSD) are disordered. Ala2 is subject to N-acetylalanine. Phosphoserine; by PKA is present on residues Ser4, Ser5, and Ser8. Position 25 is a phosphothreonine (Thr25). The segment at 26 to 51 (GQSDDSDIWDDTALIKAYDKAVASFK) is interacts with GEMIN2. Phosphoserine occurs at positions 28 and 31. Residue Lys51 forms a Glycyl lysine isopeptide (Lys-Gly) (interchain with G-Cter in SUMO2) linkage. The interval 59–88 (ICETSGKPKTTPKRKPAKKNKSQKKNTAAS) is disordered. The segment covering 68 to 82 (TTPKRKPAKKNKSQK) has biased composition (basic residues). Phosphothreonine is present on Thr69. Phosphothreonine; by PKA is present on Thr85. The Tudor domain maps to 91-151 (QWKVGDKCSA…LSPICEVANN (61 aa)). The interval 97–209 (KCSAIWSEDG…MPGPRLGPGK (113 aa)) is required for interaction with RPP20/POP7. Over residues 156–166 (AQENENESQVS) the composition is skewed to low complexity. The tract at residues 156–222 (AQENENESQV…KFNGPPPPPP (67 aa)) is disordered. Ser187 is subject to Phosphoserine; by PKA. The segment covering 194 to 204 (LPPPPPMPGPR) has biased composition (pro residues). The span at 206–215 (GPGKPGLKFN) shows a compositional bias: low complexity. Lys209 is covalently cross-linked (Glycyl lysine isopeptide (Lys-Gly) (interchain with G-Cter in SUMO2)). Positions 240–267 (PPIIPPPPPICPDSLDDADALGSMLISW) are P2 (binding site for SNRPB). The interval 252 to 280 (DSLDDADALGSMLISWYMSGYHTGYYMGF) is involved in homooligomerization. The segment at 279–294 (GFRQNQKEGRCSHSLN) is required for interaction with SYNCRIP.

This sequence belongs to the SMN family. As to quaternary structure, homooligomer; may form higher order homooligomers in the dimer to octamer range. Part of the core SMN complex that contains SMN1, GEMIN2/SIP1, DDX20/GEMIN3, GEMIN4, GEMIN5, GEMIN6, GEMIN7, GEMIN8 and STRAP/UNRIP. Part of the SMN-Sm complex that contains SMN1, GEMIN2/SIP1, DDX20/GEMIN3, GEMIN4, GEMIN5, GEMIN6, GEMIN7, GEMIN8, STRAP/UNRIP and the Sm proteins SNRPB, SNRPD1, SNRPD2, SNRPD3, SNRPE, SNRPF and SNRPG. Component of an import snRNP complex composed of KPNB1, RNUT1, SMN1 and ZNF259. Interacts with DDX20, FBL, NOLA1, RNUT1, SYNCRIP and with several spliceosomal snRNP core Sm proteins, including SNRPB, SNRPD1, SNRPD2, SNRPD3, SNRPE and ILF3. Interacts with GEMIN2; the interaction is direct. Interacts with GEMIN3; the interaction is direct. Interacts with GEMIN8; the interaction is direct. Interacts with SNRPB; the interaction is direct. Interacts (via Tudor domain) with SNRPD1 (via C-terminus); the interaction is direct. Interacts with SNRPD2; the interaction is direct. Interacts (via Tudor domain) with SNRPD3 (via C-terminus); the interaction is direct. Interacts with SNRPE; the interaction is direct. Interacts with OSTF1, LSM10, LSM11 and RPP20/POP7. Interacts (via C-terminal region) with ZPR1 (via C-terminal region). Interacts (via Tudor domain) with COIL. Interacts with SETX; recruits SETX to POLR2A. Interacts with POLR2A (via the C-terminal domain (CTD)). Interacts with PRMT5. Interacts with XRN2. Interacts (via C-terminus) with FMR1 (via C-terminus); the interaction is direct and occurs in a RNA-independent manner. Interacts (via Tudor domain) with SF3B2 ('Arg-508'-methylated form). Interacts with WRAP53/TCAB1. Interacts (via Tudor domain) with ELAVL4 in an RNA-independent manner; the interaction is required for localization of ELAVL4 to RNA granules. Interacts with FRG1. In terms of assembly, does not homooligomerize. Does not interact with SNRPB. Expressed in a wide variety of tissues. Expressed at high levels in brain, kidney and liver, moderate levels in skeletal and cardiac muscle, and low levels in fibroblasts and lymphocytes. Also seen at high levels in spinal cord. Present in osteoclasts and mononuclear cells (at protein level).

The protein resides in the nucleus. It localises to the gem. It is found in the cajal body. Its subcellular location is the cytoplasm. The protein localises to the cytoplasmic granule. The protein resides in the perikaryon. It localises to the cell projection. It is found in the neuron projection. Its subcellular location is the axon. The protein localises to the myofibril. The protein resides in the sarcomere. It localises to the z line. The SMN complex catalyzes the assembly of small nuclear ribonucleoproteins (snRNPs), the building blocks of the spliceosome, and thereby plays an important role in the splicing of cellular pre-mRNAs. Most spliceosomal snRNPs contain a common set of Sm proteins SNRPB, SNRPD1, SNRPD2, SNRPD3, SNRPE, SNRPF and SNRPG that assemble in a heptameric protein ring on the Sm site of the small nuclear RNA to form the core snRNP (Sm core). In the cytosol, the Sm proteins SNRPD1, SNRPD2, SNRPE, SNRPF and SNRPG are trapped in an inactive 6S pICln-Sm complex by the chaperone CLNS1A that controls the assembly of the core snRNP. To assemble core snRNPs, the SMN complex accepts the trapped 5Sm proteins from CLNS1A forming an intermediate. Within the SMN complex, SMN1 acts as a structural backbone and together with GEMIN2 it gathers the Sm complex subunits. Binding of snRNA inside 5Sm ultimately triggers eviction of the SMN complex, thereby allowing binding of SNRPD3 and SNRPB to complete assembly of the core snRNP. Ensures the correct splicing of U12 intron-containing genes that may be important for normal motor and proprioceptive neurons development. Also required for resolving RNA-DNA hybrids created by RNA polymerase II, that form R-loop in transcription terminal regions, an important step in proper transcription termination. May also play a role in the metabolism of small nucleolar ribonucleoprotein (snoRNPs). The polypeptide is Survival motor neuron protein (SMN1) (Homo sapiens (Human)).